Consider the following 370-residue polypeptide: Peptide chain release factor 2 (370 aa).

Residue Q252 is modified to N5-methylglutamine.

Belongs to the prokaryotic/mitochondrial release factor family. Methylated by PrmC. Methylation increases the termination efficiency of RF2.

The protein localises to the cytoplasm. In terms of biological role, peptide chain release factor 2 directs the termination of translation in response to the peptide chain termination codons UGA and UAA. The protein is Peptide chain release factor 2 of Mycobacterium avium (strain 104).